The sequence spans 833 residues: EF-hand domain-containing family member B (833 aa).

2 consecutive EF-hand domains span residues 561–596 and 597–632; these read QKFD…ANLS and LDDK…KDKM. Positions 574, 578, 580, 585, 610, 612, 614, and 621 each coordinate Ca(2+).

In terms of assembly, microtubule inner protein component of sperm flagellar doublet microtubules. Interacts with STIM1 and ORAI1; the interactions take place upon Ca(2+)-store depletion and dissociate through a Ca(2+)-dependent mechanism. Interaction with STIM1 inhibits STIM1 interaction with SARAF. In terms of tissue distribution, expressed in airway epithelial cells.

The protein resides in the cytoplasm. It localises to the cytoskeleton. The protein localises to the cilium axoneme. Its subcellular location is the flagellum axoneme. Microtubule inner protein (MIP) part of the dynein-decorated doublet microtubules (DMTs) in cilia axoneme, which is required for motile cilia beating. Cytosolic sensor for calcium, modulates the interaction of STIM1 and ORAI1 upon store depletion and the activation of store-operated Ca(2+) entry (SOCE) and NFAT translocation from cytosol to nucleus. The chain is EF-hand domain-containing family member B from Homo sapiens (Human).